The chain runs to 406 residues: Putative phosphate permease TK2061 (406 aa).

A run of 10 helical transmembrane segments spans residues 2-22 (AVMDPWLLITIIVGFGMAWAI), 45-65 (AVLIAGVLEFTGAYFFGKSVT), 82-102 (TVLIYGSVAALLAATIWLVIA), 115-135 (IIGGIVGYGIVYAGFSIVNWG), 139-159 (QVVLSWILSPIIGAIMAFLVF), 182-202 (FWIGLAFVVIGTMFYIKVLHG), 208-228 (GVLFYGIPAGLVVFLILFLTL), 288-308 (VPVPRWILAMGGLGIAIGVAT), 324-346 (LTNTRGFTIDFSAATVVLVASWL), and 385-405 (FVTVPVAALISAFLFKILMIV).

It belongs to the inorganic phosphate transporter (PiT) (TC 2.A.20) family.

It is found in the cell membrane. Potential transporter for phosphate. The chain is Putative phosphate permease TK2061 from Thermococcus kodakarensis (strain ATCC BAA-918 / JCM 12380 / KOD1) (Pyrococcus kodakaraensis (strain KOD1)).